The chain runs to 152 residues: MQLTELIETTVTGLGYELVDLERTGRGMLCIYIDQPAGISLEDCEKVTRQLQHVLTVENIDYERLEVSSPGLDRPLKKLADFERFAGSEVSVTLKKPLDGRKTYRGILHAPNGETIGLEFEGKKGEAAMLDFTLADIDKARLIPQVDFRSRK.

The protein belongs to the RimP family.

The protein localises to the cytoplasm. In terms of biological role, required for maturation of 30S ribosomal subunits. The protein is Ribosome maturation factor RimP of Burkholderia lata (strain ATCC 17760 / DSM 23089 / LMG 22485 / NCIMB 9086 / R18194 / 383).